A 433-amino-acid polypeptide reads, in one-letter code: MRMIDIIEKKRDGKSLTKEEIEFFVNGYTHEEVPDYQASSLAMAIFFQDMNDEERAALTMSMVNSGEKIDLSDINGIKVDKHSTGGVGDTTTLVLAPLVAAVGVPVAKMSGRGLGHTGGTIDKLESVKGFNVEISEKDFIKLVNDNQVAVIGQSGNLTPADKKLYALRDVTGTVNSIPLIASSIMSKKIAAGADAIVLDVKTGSGAFMKTLDDAEALAHAMVRIGNNVGRNTMAIISDMSQPLGNAIGNALELKEAISTLKGNGPKDLTELVLTLGSQMVVLAEQATSLDEARQMLIDAIKTGKALNKFKTFLSNQGGDDSIVDSPEKLPSAKYQVEFKAKKDGYITEIIANEIGVASMMLGAGRQTKEDVIDLGVGIVLNKKVGEHVEKGENILTIHTNTKEIDDILYKLDNSITIESKGEAPTLIHKIITE.

Position 81 to 83 (81 to 83 (KHS)) interacts with phosphate. Residues Gly-88 and Thr-90 each contribute to the K(+) site. Residues Thr-92, 108-110 (KMS), and Thr-120 contribute to the phosphate site. Substrate contacts are provided by Arg-168 and Lys-187. 3 residues coordinate K(+): Leu-243, Ala-246, and Glu-255.

The protein belongs to the thymidine/pyrimidine-nucleoside phosphorylase family. As to quaternary structure, homodimer. K(+) serves as cofactor.

The enzyme catalyses uridine + phosphate = alpha-D-ribose 1-phosphate + uracil. It catalyses the reaction thymidine + phosphate = 2-deoxy-alpha-D-ribose 1-phosphate + thymine. It carries out the reaction 2'-deoxyuridine + phosphate = 2-deoxy-alpha-D-ribose 1-phosphate + uracil. In terms of biological role, catalyzes phosphorolysis of the pyrimidine nucleosides uridine, thymidine and 2'-deoxyuridine with the formation of the corresponding pyrimidine base and ribose-1-phosphate. The sequence is that of Pyrimidine-nucleoside phosphorylase (pdp) from Staphylococcus epidermidis (strain ATCC 12228 / FDA PCI 1200).